The following is a 278-amino-acid chain: Hydroxyethylthiazole kinase (278 aa).

Met-48 lines the substrate pocket. Positions 124 and 175 each coordinate ATP. Gly-202 provides a ligand contact to substrate.

It belongs to the Thz kinase family. Mg(2+) is required as a cofactor.

It catalyses the reaction 5-(2-hydroxyethyl)-4-methylthiazole + ATP = 4-methyl-5-(2-phosphooxyethyl)-thiazole + ADP + H(+). The protein operates within cofactor biosynthesis; thiamine diphosphate biosynthesis; 4-methyl-5-(2-phosphoethyl)-thiazole from 5-(2-hydroxyethyl)-4-methylthiazole: step 1/1. Functionally, catalyzes the phosphorylation of the hydroxyl group of 4-methyl-5-beta-hydroxyethylthiazole (THZ). This chain is Hydroxyethylthiazole kinase, found in Clostridium botulinum (strain Eklund 17B / Type B).